The primary structure comprises 90 residues: Evasin P458 (90 aa).

Positions 1–24 (MEVKTFAFLQIAVLIAFSLHSASA) are cleaved as a signal peptide. 3 cysteine pairs are disulfide-bonded: Cys44/Cys63, Cys48/Cys65, and Cys59/Cys76. N-linked (GlcNAc...) asparagine glycosylation is present at Asn47.

Its subcellular location is the secreted. Salivary chemokine-binding protein which binds to host chemokines CXCL1, CXCL2, CXCL3, CXCL5, CXCL6 and CXCL13. This Ixodes ricinus (Common tick) protein is Evasin P458.